The chain runs to 151 residues: Deoxyuridine 5'-triphosphate nucleotidohydrolase (151 aa).

Substrate contacts are provided by residues 70-72, asparagine 83, 87-89, and methionine 97; these read RSG and LID.

This sequence belongs to the dUTPase family. Requires Mg(2+) as cofactor.

It catalyses the reaction dUTP + H2O = dUMP + diphosphate + H(+). Its pathway is pyrimidine metabolism; dUMP biosynthesis; dUMP from dCTP (dUTP route): step 2/2. This enzyme is involved in nucleotide metabolism: it produces dUMP, the immediate precursor of thymidine nucleotides and it decreases the intracellular concentration of dUTP so that uracil cannot be incorporated into DNA. This is Deoxyuridine 5'-triphosphate nucleotidohydrolase from Pseudomonas putida (strain ATCC 47054 / DSM 6125 / CFBP 8728 / NCIMB 11950 / KT2440).